We begin with the raw amino-acid sequence, 294 residues long: Cytidine deaminase (294 aa).

CMP/dCMP-type deaminase domains lie at 48-168 (DEDA…FGPK) and 186-294 (LTGD…VLLA). Position 89-91 (89-91 (NME)) interacts with substrate. His102 serves as a coordination point for Zn(2+). Catalysis depends on Glu104, which acts as the Proton donor. The Zn(2+) site is built by Cys129 and Cys132.

This sequence belongs to the cytidine and deoxycytidylate deaminase family. As to quaternary structure, homodimer. Zn(2+) is required as a cofactor.

It carries out the reaction cytidine + H2O + H(+) = uridine + NH4(+). The enzyme catalyses 2'-deoxycytidine + H2O + H(+) = 2'-deoxyuridine + NH4(+). Functionally, this enzyme scavenges exogenous and endogenous cytidine and 2'-deoxycytidine for UMP synthesis. In Shigella dysenteriae serotype 1 (strain Sd197), this protein is Cytidine deaminase.